The sequence spans 649 residues: Sulfate transporter 1.1 (649 aa).

The segment at 1–20 is disordered; the sequence is MSGTINPPDGGGSGARNPPV. The Cytoplasmic segment spans residues 1–86; the sequence is MSGTINPPDG…AREYTLRKFR (86 aa). The chain crosses the membrane as a helical span at residues 87-107; the sequence is GDLIAGLTIASLCIPQDIGYA. Residues 108–111 lie on the Extracellular side of the membrane; that stretch reads KLAN. Residues 112-132 form a helical membrane-spanning segment; that stretch reads VDPKYGLYSSFVPPLIYAGMG. At 133–136 the chain is on the cytoplasmic side; the sequence is SSRD. Residues 137–157 form a helical membrane-spanning segment; it reads IAIGPVAVVSLLVGTLCQAVI. Residues 158 to 168 are Extracellular-facing; that stretch reads DPKKNPEDYLR. The next 2 helical transmembrane spans lie at 169–189 and 190–210; these read LVFTATFFAGIFQAGLGFLRL and GFLIDFLSHAAVVGFMGGAAI. Residues 211-248 lie on the Extracellular side of the membrane; it reads TIALQQLKGFLGIKTFTKKTDIVSVMHSVFKNAEHGWN. The chain crosses the membrane as a helical span at residues 249-269; it reads WQTIVIGASFLTFLLVTKFIG. Topologically, residues 270-275 are cytoplasmic; sequence KRNRKL. A helical membrane pass occupies residues 276-296; it reads FWVPAIAPLISVIISTFFVFI. The Extracellular segment spans residues 297–334; the sequence is FRADKQGVQIVKHIDQGINPISVHKIFFSGKYFTEGIR. A helical transmembrane segment spans residues 335-355; sequence IGGIAGMVALTEAVAIARTFA. Residues 356-367 lie on the Cytoplasmic side of the membrane; the sequence is AMKDYQIDGNKE. The helical transmembrane segment at 368–388 threads the bilayer; it reads MIALGTMNVVGSMTSCYIATG. Residues 389 to 404 lie on the Extracellular side of the membrane; the sequence is SFSRSAVNFMAGVETA. Residues 405-425 form a helical membrane-spanning segment; that stretch reads VSNIVMAIVVALTLEFITPLF. Residues 426–431 lie on the Cytoplasmic side of the membrane; sequence KYTPNA. Residues 432–452 form a helical membrane-spanning segment; the sequence is ILAAIIISAVLGLIDIDAAIL. At 453 to 465 the chain is on the extracellular side; that stretch reads IWRIDKLDFLACM. A helical membrane pass occupies residues 466 to 486; the sequence is GAFLGVIFISVEIGLLIAVVI. Over 487 to 649 the chain is Cytoplasmic; the sequence is SFAKILLQVT…CSTEVAEQQT (163 aa). An STAS domain is found at 517-640; sequence QYPDAAQIPG…LTVGDAVAVC (124 aa).

This sequence belongs to the SLC26A/SulP transporter (TC 2.A.53) family. In terms of assembly, interacts with OASA1 through its STAS domain. As to expression, expressed in lateral root cap, root hairs, epidermal and cortical cells of roots.

It is found in the membrane. High-affinity H(+)/sulfate cotransporter that mediates the uptake of the environmental sulfate by plant roots under low-sulfur conditions. Plays a central role in the regulation of sulfate assimilation. In Arabidopsis thaliana (Mouse-ear cress), this protein is Sulfate transporter 1.1 (SULTR1;1).